A 155-amino-acid polypeptide reads, in one-letter code: MRRRRAEKRQIPPDPVFGDVLVAKLINRVMWDGKKTIAQKIVYGAFDIIREKTKKDPLEVFRQAVENVKPVLEVRPRRVGGATYQVPIEVQEPRRTSLALRWIVEAARAKKGRPMKEKLAEEIIAAYNNTGTAIKKKEDTHRMAEANRAFAHYRW.

This sequence belongs to the universal ribosomal protein uS7 family. As to quaternary structure, part of the 30S ribosomal subunit. Contacts proteins S9 and S11.

Its function is as follows. One of the primary rRNA binding proteins, it binds directly to 16S rRNA where it nucleates assembly of the head domain of the 30S subunit. Is located at the subunit interface close to the decoding center, probably blocks exit of the E-site tRNA. The chain is Small ribosomal subunit protein uS7 from Thermotoga maritima (strain ATCC 43589 / DSM 3109 / JCM 10099 / NBRC 100826 / MSB8).